The chain runs to 107 residues: uncharacterized protein (107 aa).

2 disordered regions span residues 51–75 and 88–107; these read VQRSRLRRKGPINGNQGSAIPTQSA and NPTPRGLSRLAASVPTAPEP. Positions 63–75 are enriched in polar residues; that stretch reads NGNQGSAIPTQSA.

This is an uncharacterized protein from Fowl adenovirus A serotype 1 (strain CELO / Phelps) (FAdV-1).